Here is a 244-residue protein sequence, read N- to C-terminus: Phosphoribosyl isomerase A (244 aa).

The active-site Proton acceptor is the D10. Residue D129 is the Proton donor of the active site.

The protein belongs to the HisA/HisF family.

The protein resides in the cytoplasm. The catalysed reaction is 1-(5-phospho-beta-D-ribosyl)-5-[(5-phospho-beta-D-ribosylamino)methylideneamino]imidazole-4-carboxamide = 5-[(5-phospho-1-deoxy-D-ribulos-1-ylimino)methylamino]-1-(5-phospho-beta-D-ribosyl)imidazole-4-carboxamide. The enzyme catalyses N-(5-phospho-beta-D-ribosyl)anthranilate = 1-(2-carboxyphenylamino)-1-deoxy-D-ribulose 5-phosphate. It participates in amino-acid biosynthesis; L-histidine biosynthesis; L-histidine from 5-phospho-alpha-D-ribose 1-diphosphate: step 4/9. The protein operates within amino-acid biosynthesis; L-tryptophan biosynthesis; L-tryptophan from chorismate: step 3/5. Functionally, involved in both the histidine and tryptophan biosynthetic pathways. The chain is Phosphoribosyl isomerase A (priA) from Mycobacterium tuberculosis (strain CDC 1551 / Oshkosh).